Reading from the N-terminus, the 523-residue chain is Uridylate cyclase (523 aa).

2 consecutive Guanylate cyclase domains span residues 69–209 (VHVY…AKLA) and 318–438 (MSIF…IGIR). Positions 72 and 125 each coordinate a ribonucleoside 5'-triphosphate. 3 residues coordinate Mn(2+): Asp323, Ile324, and Asp372.

It belongs to the adenylyl cyclase class-4/guanylyl cyclase family. Pyrimidine cyclase subfamily. In terms of assembly, monomer. Mn(2+) serves as cofactor.

The protein resides in the cytoplasm. The catalysed reaction is UTP = 3',5'-cyclic UMP + diphosphate. Functionally, pycsar (pyrimidine cyclase system for antiphage resistance) provides immunity against bacteriophage. The pyrimidine cyclase (PycC) synthesizes cyclic nucleotides in response to infection; these serve as specific second messenger signals. The signals activate the nearby effector, leading to bacterial cell death and abortive phage infection. A clade A Pycsar system. Its function is as follows. The pyrimidine cyclase gene of a two-gene Pycsar system, generates cyclic UMP (cUMP) from UTP, has little to no activity on ATP, CTP or GTP. Expression of this and effector RsPycTM (AC A0A4R2UGS4) probably confers resistance to some bacteriophage. The genes are probably only expressed in response to bacteriophage infection. The polypeptide is Uridylate cyclase (Rhizobium sp. (strain PP-F2F-G36)).